The following is a 1123-amino-acid chain: Adenylyl cyclase X E (1123 aa).

At 1–47 the chain is on the cytoplasmic side; it reads MPRSLGNCQLNYSKERMWEPGYLKAKCAELRLESEFRLYRIRLWKSY. Residues 48–68 traverse the membrane as a helical segment; the sequence is LLTFFMLHIFVTSVHCALLLA. Topologically, residues 69–73 are extracellular; sequence TIERR. The chain crosses the membrane as a helical span at residues 74 to 94; sequence SIIYFDVALSIGCALVLILVL. Over 95–106 the chain is Cytoplasmic; it reads SVNFCDEFIAKH. The chain crosses the membrane as a helical span at residues 107-127; the sequence is TWYMYASSIFASLTLVFADLT. Residues 128 to 137 lie on the Extracellular side of the membrane; the sequence is ESIYHTYAHS. The helical transmembrane segment at 138–158 threads the bilayer; it reads WILGTFYDTYIIYMIYMFLPI. Residues 159 to 163 are Cytoplasmic-facing; sequence HFISG. The chain crosses the membrane as a helical span at residues 164–184; the sequence is AVLLALLVSGLYILYFVIFIA. Topologically, residues 185–196 are extracellular; the sequence is QGFAQFASALFS. A helical transmembrane segment spans residues 197-217; the sequence is VGGMSVDIVHYLCLNLVGIFY. The Cytoplasmic segment spans residues 218–581; that stretch reads RVMNDTVVRS…YLKQTDYMYK (364 aa). Residues 346-348 and Arg-392 contribute to the ATP site; that span reads LGD. Residue Asp-348 coordinates Mg(2+). Residues 582 to 602 form a helical membrane-spanning segment; the sequence is YSIILSASVGCSLVYIELMDT. The Extracellular segment spans residues 603 to 608; that stretch reads QMICSS. Residues 609–629 traverse the membrane as a helical segment; that stretch reads CFVLPASVATIQCILALIAWY. Residues 630–667 are Cytoplasmic-facing; the sequence is KKYCWTRYGRNNVPHHYNGFSCFIFRIHDKILNSLPIR. Residues 668–688 traverse the membrane as a helical segment; it reads ICIYLFLMISSFFVMCLIVMS. At 689–719 the chain is on the extracellular side; sequence CQREEFEMAYIEERLFHYEQEAHICFHPWVT. A helical membrane pass occupies residues 720–740; the sequence is TNMLSLMICLTFTFAHIPIMV. Topologically, residues 741 to 743 are cytoplasmic; that stretch reads KTA. A helical membrane pass occupies residues 744–764; it reads VAILETLAYLLLIFFQFDFVF. Topologically, residues 765-772 are extracellular; it reads HHSVTTNP. A helical membrane pass occupies residues 773–793; the sequence is YFKSEYAHALLICITFLIMFV. The Cytoplasmic segment spans residues 794–1123; the sequence is KERQIEFTNK…STSRHTLQSL (330 aa). Residues Lys-903, 1014 to 1016, 1021 to 1025, and Lys-1061 each bind ATP; these read DIW and NMASR.

It belongs to the adenylyl cyclase class-4/guanylyl cyclase family. Expressed in labella.

The protein localises to the membrane. It catalyses the reaction ATP = 3',5'-cyclic AMP + diphosphate. In terms of biological role, catalyzes the formation of the signaling molecule cAMP in response to G-protein signaling. This is Adenylyl cyclase X E from Drosophila melanogaster (Fruit fly).